Consider the following 152-residue polypeptide: Transcriptional regulator MraZ (152 aa).

SpoVT-AbrB domains are found at residues Ala-5 to Glu-52 and Ala-81 to Thr-124.

The protein belongs to the MraZ family. In terms of assembly, forms oligomers.

The protein resides in the cytoplasm. Its subcellular location is the nucleoid. In terms of biological role, negatively regulates its own expression and that of the subsequent genes in the proximal part of the division and cell wall (dcw) gene cluster. Acts by binding directly to DNA. May also regulate the expression of genes outside the dcw cluster. The chain is Transcriptional regulator MraZ from Enterobacter sp. (strain 638).